A 217-amino-acid chain; its full sequence is Ribonuclease HII (217 aa).

One can recognise an RNase H type-2 domain in the interval 27–216 (RTIAGIDEAG…VREHLGESRC (190 aa)). A divalent metal cation is bound by residues D33, E34, and D125.

Belongs to the RNase HII family. Mn(2+) is required as a cofactor. Mg(2+) serves as cofactor.

Its subcellular location is the cytoplasm. It carries out the reaction Endonucleolytic cleavage to 5'-phosphomonoester.. Functionally, endonuclease that specifically degrades the RNA of RNA-DNA hybrids. The polypeptide is Ribonuclease HII (Geobacter sulfurreducens (strain ATCC 51573 / DSM 12127 / PCA)).